A 163-amino-acid polypeptide reads, in one-letter code: Large ribosomal subunit protein uL15 (163 aa).

This sequence belongs to the universal ribosomal protein uL15 family. Part of the 50S ribosomal subunit.

Its function is as follows. Binds to the 23S rRNA. The sequence is that of Large ribosomal subunit protein uL15 from Orientia tsutsugamushi (strain Boryong) (Rickettsia tsutsugamushi).